A 616-amino-acid polypeptide reads, in one-letter code: Dihydroxy-acid dehydratase (616 aa).

Asp81 contacts Mg(2+). Residue Cys122 coordinates [2Fe-2S] cluster. Asp123 and Lys124 together coordinate Mg(2+). Residue Lys124 is modified to N6-carboxylysine. Residue Cys195 coordinates [2Fe-2S] cluster. Glu491 serves as a coordination point for Mg(2+). The active-site Proton acceptor is Ser517.

Belongs to the IlvD/Edd family. Homodimer. [2Fe-2S] cluster serves as cofactor. The cofactor is Mg(2+).

It carries out the reaction (2R)-2,3-dihydroxy-3-methylbutanoate = 3-methyl-2-oxobutanoate + H2O. It catalyses the reaction (2R,3R)-2,3-dihydroxy-3-methylpentanoate = (S)-3-methyl-2-oxopentanoate + H2O. The protein operates within amino-acid biosynthesis; L-isoleucine biosynthesis; L-isoleucine from 2-oxobutanoate: step 3/4. Its pathway is amino-acid biosynthesis; L-valine biosynthesis; L-valine from pyruvate: step 3/4. In terms of biological role, functions in the biosynthesis of branched-chain amino acids. Catalyzes the dehydration of (2R,3R)-2,3-dihydroxy-3-methylpentanoate (2,3-dihydroxy-3-methylvalerate) into 2-oxo-3-methylpentanoate (2-oxo-3-methylvalerate) and of (2R)-2,3-dihydroxy-3-methylbutanoate (2,3-dihydroxyisovalerate) into 2-oxo-3-methylbutanoate (2-oxoisovalerate), the penultimate precursor to L-isoleucine and L-valine, respectively. This Salmonella agona (strain SL483) protein is Dihydroxy-acid dehydratase.